We begin with the raw amino-acid sequence, 594 residues long: DNA mismatch repair protein MutL (594 aa).

This sequence belongs to the DNA mismatch repair MutL/HexB family.

Its function is as follows. This protein is involved in the repair of mismatches in DNA. It is required for dam-dependent methyl-directed DNA mismatch repair. May act as a 'molecular matchmaker', a protein that promotes the formation of a stable complex between two or more DNA-binding proteins in an ATP-dependent manner without itself being part of a final effector complex. The chain is DNA mismatch repair protein MutL from Rhizorhabdus wittichii (strain DSM 6014 / CCUG 31198 / JCM 15750 / NBRC 105917 / EY 4224 / RW1) (Sphingomonas wittichii).